The chain runs to 97 residues: Large ribosomal subunit protein uL23 (97 aa).

This sequence belongs to the universal ribosomal protein uL23 family. Part of the 50S ribosomal subunit. Contacts protein L29, and trigger factor when it is bound to the ribosome.

In terms of biological role, one of the early assembly proteins it binds 23S rRNA. One of the proteins that surrounds the polypeptide exit tunnel on the outside of the ribosome. Forms the main docking site for trigger factor binding to the ribosome. The protein is Large ribosomal subunit protein uL23 of Brucella anthropi (strain ATCC 49188 / DSM 6882 / CCUG 24695 / JCM 21032 / LMG 3331 / NBRC 15819 / NCTC 12168 / Alc 37) (Ochrobactrum anthropi).